The primary structure comprises 530 residues: Type 2 DNA topoisomerase 6 subunit B (530 aa).

Residues N42, D76, S97 to K98, G106 to K113, and K427 each bind ATP.

It belongs to the TOP6B family. As to quaternary structure, homodimer. Heterotetramer of two Top6A and two Top6B chains.

It carries out the reaction ATP-dependent breakage, passage and rejoining of double-stranded DNA.. In terms of biological role, relaxes both positive and negative superturns and exhibits a strong decatenase activity. The protein is Type 2 DNA topoisomerase 6 subunit B of Saccharolobus solfataricus (strain ATCC 35092 / DSM 1617 / JCM 11322 / P2) (Sulfolobus solfataricus).